We begin with the raw amino-acid sequence, 422 residues long: Enolase (422 aa).

Gln-162 contacts (2R)-2-phosphoglycerate. Catalysis depends on Glu-204, which acts as the Proton donor. Positions 241, 284, and 311 each coordinate Mg(2+). Residues Lys-336, Arg-365, Ser-366, and Lys-387 each coordinate (2R)-2-phosphoglycerate. The active-site Proton acceptor is the Lys-336.

It belongs to the enolase family. Component of the RNA degradosome, a multiprotein complex involved in RNA processing and mRNA degradation. It depends on Mg(2+) as a cofactor.

It is found in the cytoplasm. It localises to the secreted. Its subcellular location is the cell surface. It carries out the reaction (2R)-2-phosphoglycerate = phosphoenolpyruvate + H2O. The protein operates within carbohydrate degradation; glycolysis; pyruvate from D-glyceraldehyde 3-phosphate: step 4/5. Its function is as follows. Catalyzes the reversible conversion of 2-phosphoglycerate (2-PG) into phosphoenolpyruvate (PEP). It is essential for the degradation of carbohydrates via glycolysis. This chain is Enolase, found in Legionella pneumophila (strain Paris).